The sequence spans 153 residues: Calmodulin-like protein 4 (153 aa).

4 consecutive EF-hand domains span residues 8-43, 44-79, 81-116, and 117-152; these read DAIQ…LGTC, PTPG…QQKQ, DPEN…MGEK, and LTPE…PVPD.

This sequence belongs to the calmodulin family. In terms of assembly, associates with the IMAC/intermicrovillar adhesion complex.

Its subcellular location is the cell projection. The protein localises to the microvillus. Its function is as follows. As part of the intermicrovillar adhesion complex/IMAC plays a role in epithelial brush border differentiation, controlling microvilli organization and length. Acts as a light chain for MYO7B and is required for efficient targeting of the IMAC to the tips of border brush microvilli. The chain is Calmodulin-like protein 4 (calml4) from Xenopus tropicalis (Western clawed frog).